The primary structure comprises 210 residues: Prolactin-2 (210 aa).

A signal peptide spans 1–23; it reads MARRSQGTKLHLAVLCLVVSCHA. 2 cysteine pairs are disulfide-bonded: cysteine 69/cysteine 183 and cysteine 200/cysteine 210.

Belongs to the somatotropin/prolactin family.

It is found in the secreted. The sequence is that of Prolactin-2 (prl2) from Oncorhynchus keta (Chum salmon).